Consider the following 248-residue polypeptide: UPF0328 protein ECU06_0030/ECU06_1690/ECU11_0020 (248 aa).

Disordered regions lie at residues 1 to 34 and 51 to 81; these read MVRHSKNILPKTTNPNPESNRYPPHPADPSHPSR and ASAENRRRDPQNLSTTKATSPSTHQSPILPD. 2 stretches are compositionally biased toward polar residues: residues 10 to 19 and 61 to 76; these read PKTTNPNPES and QNLSTTKATSPSTHQS.

It belongs to the UPF0328 family.

The protein is UPF0328 protein ECU06_0030/ECU06_1690/ECU11_0020 of Encephalitozoon cuniculi (strain GB-M1) (Microsporidian parasite).